The following is a 183-amino-acid chain: uncharacterized protein (183 aa).

It belongs to the herpesviridae US1 family.

This is an uncharacterized protein from Human cytomegalovirus (strain AD169) (HHV-5).